Reading from the N-terminus, the 336-residue chain is Cytosolic 5'-nucleotidase 3A (336 aa).

Residue Asp88 is the Nucleophile of the active site. Asp88 and Asp90 together coordinate Mg(2+). Asp90 acts as the Proton donor in catalysis. Glu135 provides a ligand contact to CMP. Positions 135 and 156 each coordinate N(7)-methyl-GMP. Residues 203–204 and Lys252 contribute to the substrate site; that span reads SA. Asp277 serves as a coordination point for Mg(2+). Ser278 bears the Phosphoserine mark.

This sequence belongs to the pyrimidine 5'-nucleotidase family. Monomer. In terms of tissue distribution, isoforms 1, 3 and 4 are expressed in reticulocytes. Isoform 4 is hardly detectable in bone marrow and fetal liver.

It is found in the cytoplasm. It localises to the endoplasmic reticulum. The enzyme catalyses N(7)-methyl-GMP + H2O = N(7)-methylguanosine + phosphate. The catalysed reaction is CMP + H2O = cytidine + phosphate. It carries out the reaction a ribonucleoside 5'-phosphate + H2O = a ribonucleoside + phosphate. Its function is as follows. Nucleotidase which shows specific activity towards cytidine monophosphate (CMP) and 7-methylguanosine monophosphate (m(7)GMP). CMP seems to be the preferred substrate. This chain is Cytosolic 5'-nucleotidase 3A (NT5C3A), found in Homo sapiens (Human).